Here is a 438-residue protein sequence, read N- to C-terminus: GTPase Der (438 aa).

2 EngA-type G domains span residues 4–168 (PIVA…PAVP) and 176–351 (LKVA…EAAN). Residues 10–17 (GRPNVGKS), 57–61 (DTGGI), 120–123 (NKVE), 182–189 (GRPNVGKS), 229–233 (DTAGM), and 294–297 (NKWD) contribute to the GTP site. The region spanning 352–436 (RRVATGTLNA…PIRLIFRRGR (85 aa)) is the KH-like domain.

It belongs to the TRAFAC class TrmE-Era-EngA-EngB-Septin-like GTPase superfamily. EngA (Der) GTPase family. Associates with the 50S ribosomal subunit.

In terms of biological role, GTPase that plays an essential role in the late steps of ribosome biogenesis. The sequence is that of GTPase Der from Moorella thermoacetica (strain ATCC 39073 / JCM 9320).